Here is a 9159-residue protein sequence, read N- to C-terminus: Halomucin (9159 aa).

The signal sequence occupies residues 1 to 30 (MSQTAKPIFAVVVALIVLISGVAFIGSVSA). C-type lectin domains follow at residues 644–776 (TTGN…YLVE) and 929–1060 (YDGH…VEYG). Polar residues predominate over residues 1310–1332 (QPQTVNDPDAVSTRNNNVGSNGL). A disordered region spans residues 1310 to 1351 (QPQTVNDPDAVSTRNNNVGSNGLDSKIEDDQNNGADGNPHGT). Positions 1756–3380 (VGGLIGESSG…GFNGEHVGGL (1625 aa)) are V-G-G-L motif-rich region. Disordered regions lie at residues 3484–3514 (GATA…PAPQ), 4878–4912 (ESYW…TTPA), 6570–6589 (TDSA…SSGQ), 7047–7097 (TPTV…GINT), 7660–7702 (ATDS…NPGG), 7888–7923 (IDGD…EPAL), 8212–8237 (STQQ…GAAD), and 8369–8614 (DSTA…GSST). A compositionally biased stretch (gly residues) spans 3495–3505 (GTPGGATGYGS). Basic and acidic residues predominate over residues 4880–4890 (YWDKGATDKSD). Polar residues-rich tracts occupy residues 7048 to 7057 (PTVTINSSSD) and 7068 to 7078 (GEDSTSSNESS). Residues 7079-7092 (DGTESDQGDPEDDI) are compositionally biased toward acidic residues. Positions 7681 to 7698 (VTGSTPTFVSSGTVTTPE) are enriched in polar residues. The 108-residue stretch at 7686–7793 (PTFVSSGTVT…ITDVDEQPTG (108 aa)) folds into the Cadherin domain. Acidic residues-rich tracts occupy residues 7888–7898 (IDGDGLADDNE) and 7905–7920 (DNDD…EDQE). Acidic residues predominate over residues 8378-8390 (ALEDDSSNQDSGD). Composition is skewed to low complexity over residues 8391-8529 (DSSN…SSQN) and 8538-8548 (SAAAVGAESGS). Gly residues-rich tracts occupy residues 8549–8566 (EMGG…GDGS) and 8574–8608 (AGGG…GSSS).

Probably glycosylated with sugar containing sialic acid. This may further contribute to its overall negative charge, thereby creating an aqueous shield covering the cells.

The protein localises to the secreted. Its function is as follows. May protect the organism from desiccation stress. May also contribute to the rigidity and maintenance of the unique square cell morphology of H.walsbyi. The polypeptide is Halomucin (hmu) (Haloquadratum walsbyi (strain DSM 16790 / HBSQ001)).